The primary structure comprises 116 residues: Large ribosomal subunit protein uL18 (116 aa).

The protein belongs to the universal ribosomal protein uL18 family. In terms of assembly, part of the 50S ribosomal subunit; part of the 5S rRNA/L5/L18/L25 subcomplex. Contacts the 5S and 23S rRNAs.

In terms of biological role, this is one of the proteins that bind and probably mediate the attachment of the 5S RNA into the large ribosomal subunit, where it forms part of the central protuberance. The polypeptide is Large ribosomal subunit protein uL18 (Shewanella putrefaciens (strain CN-32 / ATCC BAA-453)).